Here is a 146-residue protein sequence, read N- to C-terminus: Large ribosomal subunit protein uL15 (146 aa).

The tract at residues 1–65 (MSDIQLNTLK…GQMPLQRRLP (65 aa)) is disordered. Over residues 24–34 (RGIGSGLGKTA) the composition is skewed to gly residues.

It belongs to the universal ribosomal protein uL15 family. In terms of assembly, part of the 50S ribosomal subunit.

In terms of biological role, binds to the 23S rRNA. The sequence is that of Large ribosomal subunit protein uL15 from Bordetella parapertussis (strain 12822 / ATCC BAA-587 / NCTC 13253).